The sequence spans 71 residues: Protein CYSTEINE-RICH TRANSMEMBRANE MODULE 8 (71 aa).

Residues 1–22 (MNQSAQNYFSVQKPSETSSGPY) are compositionally biased toward polar residues. The disordered stretch occupies residues 1–35 (MNQSAQNYFSVQKPSETSSGPYTSPPPIGYPTRDA). A helical membrane pass occupies residues 48–64 (NSKGVNPEGCCAAICCC).

It belongs to the CYSTM1 family. Mostly expressed in stems, siliques, roots and flowers and, to a lower extent, in leaves.

It is found in the membrane. It localises to the nucleus. In terms of biological role, involved in resistance to abiotic stress. The chain is Protein CYSTEINE-RICH TRANSMEMBRANE MODULE 8 from Arabidopsis thaliana (Mouse-ear cress).